Here is a 398-residue protein sequence, read N- to C-terminus: DNA replication and repair protein RecF (398 aa).

30 to 37 (GRNGFGKT) provides a ligand contact to ATP.

Belongs to the RecF family.

The protein resides in the cytoplasm. In terms of biological role, the RecF protein is involved in DNA metabolism; it is required for DNA replication and normal SOS inducibility. RecF binds preferentially to single-stranded, linear DNA. It also seems to bind ATP. The protein is DNA replication and repair protein RecF of Corynebacterium efficiens (strain DSM 44549 / YS-314 / AJ 12310 / JCM 11189 / NBRC 100395).